A 331-amino-acid chain; its full sequence is MPTLKELIAKLPKAELHLHIEGSLEPELMFELAQKNRIPLPYKSVEEVRKAYSFTSLQSFLDIYYAGAKVLLTESDFFDLAWAYLLRCKAQNICHTEIFFDPQTHTSRGVSFETVIEGITKALEKGEKELGISSFLIMCFLRHLSESEGFEILKSSLPFREKILGVGLDSSEVGHPPSKFERLFLECRKAGYKIVAHAGEEGDSSYIWEAIHKLQVERIDHGIRCEEDENLVEWLIQKQTPLTVCPLSNVKLQAVKNLSEHNILRLLRKGVLVTVNSDDPAYFGGYLNENYEALSEHLNASKEELKALAINSFKASFLSEEKKMDWIKQII.

Zn(2+)-binding residues include histidine 17, histidine 19, and histidine 197. The active-site Proton donor is the glutamate 200. Aspartate 278 lines the Zn(2+) pocket. A substrate-binding site is contributed by aspartate 279.

The protein belongs to the metallo-dependent hydrolases superfamily. Adenosine and AMP deaminases family. Adenine deaminase type 2 subfamily. It depends on Zn(2+) as a cofactor.

It carries out the reaction adenine + H2O + H(+) = hypoxanthine + NH4(+). Its function is as follows. Catalyzes the hydrolytic deamination of adenine to hypoxanthine. Plays an important role in the purine salvage pathway and in nitrogen catabolism. In Wolinella succinogenes (strain ATCC 29543 / DSM 1740 / CCUG 13145 / JCM 31913 / LMG 7466 / NCTC 11488 / FDC 602W) (Vibrio succinogenes), this protein is Adenine deaminase.